The chain runs to 123 residues: Large ribosomal subunit protein bL12 (123 aa).

This sequence belongs to the bacterial ribosomal protein bL12 family. In terms of assembly, homodimer. Part of the ribosomal stalk of the 50S ribosomal subunit. Forms a multimeric L10(L12)X complex, where L10 forms an elongated spine to which 2 to 4 L12 dimers bind in a sequential fashion. Binds GTP-bound translation factors.

Its function is as follows. Forms part of the ribosomal stalk which helps the ribosome interact with GTP-bound translation factors. Is thus essential for accurate translation. The polypeptide is Large ribosomal subunit protein bL12 (Haemophilus influenzae (strain 86-028NP)).